Here is a 1083-residue protein sequence, read N- to C-terminus: Carbamoyl phosphate synthase large chain (1083 aa).

The carboxyphosphate synthetic domain stretch occupies residues 1–402 (MPRRDDIKKI…SFQKALRGLE (402 aa)). 12 residues coordinate ATP: Arg129, Arg169, Gly175, Gly176, Glu208, Ile210, Glu215, Gly241, Val242, His243, Gln285, and Glu299. The ATP-grasp 1 domain maps to 133–328 (KQAMDKIGLD…IAKIAAKLAV (196 aa)). Gln285, Glu299, and Asn301 together coordinate Mg(2+). 3 residues coordinate Mn(2+): Gln285, Glu299, and Asn301. The interval 403 to 557 (VGAFGFGSDP…YSTYESETEV (155 aa)) is oligomerization domain. The segment at 558 to 944 (PAKGDKKRVV…AFAKSQLAAG (387 aa)) is carbamoyl phosphate synthetic domain. Positions 683-878 (SSLIDELGLR…VANLATKVMA (196 aa)) constitute an ATP-grasp 2 domain. ATP contacts are provided by Arg719, Arg758, Leu760, Glu765, Gly790, Val791, His792, Ser793, Gln833, and Glu849. Residues Gln833, Glu849, and Asn851 each coordinate Mg(2+). Mn(2+) contacts are provided by Gln833, Glu849, and Asn851. The 139-residue stretch at 945 to 1083 (TVLPESGKIF…SLQRRYAQNV (139 aa)) folds into the MGS-like domain. The interval 945 to 1083 (TVLPESGKIF…SLQRRYAQNV (139 aa)) is allosteric domain.

The protein belongs to the CarB family. In terms of assembly, composed of two chains; the small (or glutamine) chain promotes the hydrolysis of glutamine to ammonia, which is used by the large (or ammonia) chain to synthesize carbamoyl phosphate. Tetramer of heterodimers (alpha,beta)4. Mg(2+) is required as a cofactor. Mn(2+) serves as cofactor.

The catalysed reaction is hydrogencarbonate + L-glutamine + 2 ATP + H2O = carbamoyl phosphate + L-glutamate + 2 ADP + phosphate + 2 H(+). It carries out the reaction hydrogencarbonate + NH4(+) + 2 ATP = carbamoyl phosphate + 2 ADP + phosphate + 2 H(+). It participates in amino-acid biosynthesis; L-arginine biosynthesis; carbamoyl phosphate from bicarbonate: step 1/1. The protein operates within pyrimidine metabolism; UMP biosynthesis via de novo pathway; (S)-dihydroorotate from bicarbonate: step 1/3. Its function is as follows. Large subunit of the glutamine-dependent carbamoyl phosphate synthetase (CPSase). CPSase catalyzes the formation of carbamoyl phosphate from the ammonia moiety of glutamine, carbonate, and phosphate donated by ATP, constituting the first step of 2 biosynthetic pathways, one leading to arginine and/or urea and the other to pyrimidine nucleotides. The large subunit (synthetase) binds the substrates ammonia (free or transferred from glutamine from the small subunit), hydrogencarbonate and ATP and carries out an ATP-coupled ligase reaction, activating hydrogencarbonate by forming carboxy phosphate which reacts with ammonia to form carbamoyl phosphate. The protein is Carbamoyl phosphate synthase large chain of Rhodopirellula baltica (strain DSM 10527 / NCIMB 13988 / SH1).